Reading from the N-terminus, the 525-residue chain is RNA-directed RNA polymerase (525 aa).

The RdRp catalytic domain maps to 72 to 272; that stretch reads LVYADNIYIV…DKERLFCSAA (201 aa).

In terms of assembly, interacts with VP3 in the cytoplasm. May exist in multiple phosphorylated forms.

It is found in the virion. It catalyses the reaction RNA(n) + a ribonucleoside 5'-triphosphate = RNA(n+1) + diphosphate. RNA-dependent RNA polymerase which is found both free and covalently attached to the genomic RNA. May also contain guanylyl and methyl transferase activities. The sequence is that of RNA-directed RNA polymerase (VP1) from Gallus gallus (Chicken).